The chain runs to 622 residues: Solute carrier family 2, facilitated glucose transporter member 12 (622 aa).

The segment at 1-26 (MVPVENTEGPNLLNQKGREAETEGSC) is disordered. Residues 1 to 44 (MVPVENTEGPNLLNQKGREAETEGSCGASGGGHPACAGGPSMFT) lie on the Cytoplasmic side of the membrane. Residues 45 to 65 (FLTSVTAAISGLLVGYELGLI) form a helical membrane-spanning segment. The Extracellular portion of the chain corresponds to 66-84 (SGALLQIRTLLALTCHEQE). Residues 85–105 (MVVSSLLIGAFLASLTGGVLI) form a helical membrane-spanning segment. Residues 106 to 111 (DRYGRR) are Cytoplasmic-facing. A helical membrane pass occupies residues 112–132 (LAIILSSCLLGLGSLVLIMSL). Residues 133 to 141 (SYTLLIMGR) are Extracellular-facing. A helical membrane pass occupies residues 142-162 (VAIGVSISLSSIATCVYIAEI). Over 163–168 (APQHRR) the chain is Cytoplasmic. The chain crosses the membrane as a helical span at residues 169 to 189 (GLLVSLNELMIVTGILFAYIS). The Extracellular segment spans residues 190–201 (NYAFANISNGWK). The N-linked (GlcNAc...) asparagine glycan is linked to Asn-195. The helical transmembrane segment at 202-222 (YMFGLVIPLGVLQAIAMYFLP) threads the bilayer. Residues 223-282 (PSPRFLVMKGQEESAGKVLRKLRVISDTTEELTLIKSSLKDEYQYSFWDLFRSKDNMRTR) lie on the Cytoplasmic side of the membrane. Residues 283–303 (ILIGLTLVFFVQTTGQPNILF) form a helical membrane-spanning segment. Residues 304–321 (YASTVLKSVGFQSNEAAS) are Extracellular-facing. The chain crosses the membrane as a helical span at residues 322 to 342 (LASTGVGVVKVVSTIPATLLV). Over 343–349 (DHIGSKT) the chain is Cytoplasmic. Residues 350–370 (FLCIGSSVMSASLLTMGIVNL) traverse the membrane as a helical segment. The Extracellular segment spans residues 371-471 (NINMNFTNIC…PAAYKWLSLA (101 aa)). Asn-375, Asn-387, Asn-400, and Asn-405 each carry an N-linked (GlcNAc...) asparagine glycan. A helical transmembrane segment spans residues 472–492 (SLLVYVAAFSIGLGPMPWLVL). The Cytoplasmic segment spans residues 493-503 (SEIFPGGIRGR). A helical transmembrane segment spans residues 504 to 524 (AMALTSSMNWGVNLLISLTFL). The Extracellular segment spans residues 525–533 (TVTDLIGLS). Residues 534–554 (WVCFIYTIMSLASLAFVVLFI) traverse the membrane as a helical segment. Topologically, residues 555-622 (PETKGCSLEQ…GQSQRPSPDT (68 aa)) are cytoplasmic.

The protein belongs to the major facilitator superfamily. Sugar transporter (TC 2.A.1.1) family. Glucose transporter subfamily. Expressed in skeletal muscle, heart, brain, kidney, spleen, adipose tissues and to a lesser extent in small intestine and lung.

The protein localises to the cell membrane. The protein resides in the endomembrane system. Its subcellular location is the cytoplasm. It is found in the perinuclear region. It catalyses the reaction D-glucose(out) = D-glucose(in). In terms of biological role, insulin-independent facilitative glucose transporter. This Mus musculus (Mouse) protein is Solute carrier family 2, facilitated glucose transporter member 12.